We begin with the raw amino-acid sequence, 201 residues long: ATP-dependent Clp protease proteolytic subunit (201 aa).

Residue Ser98 is the Nucleophile of the active site. His123 is a catalytic residue.

Belongs to the peptidase S14 family. In terms of assembly, fourteen ClpP subunits assemble into 2 heptameric rings which stack back to back to give a disk-like structure with a central cavity, resembling the structure of eukaryotic proteasomes.

It is found in the cytoplasm. It catalyses the reaction Hydrolysis of proteins to small peptides in the presence of ATP and magnesium. alpha-casein is the usual test substrate. In the absence of ATP, only oligopeptides shorter than five residues are hydrolyzed (such as succinyl-Leu-Tyr-|-NHMec, and Leu-Tyr-Leu-|-Tyr-Trp, in which cleavage of the -Tyr-|-Leu- and -Tyr-|-Trp bonds also occurs).. Its function is as follows. Cleaves peptides in various proteins in a process that requires ATP hydrolysis. Has a chymotrypsin-like activity. Plays a major role in the degradation of misfolded proteins. The sequence is that of ATP-dependent Clp protease proteolytic subunit from Rickettsia typhi (strain ATCC VR-144 / Wilmington).